A 75-amino-acid polypeptide reads, in one-letter code: MQYKTFLVISLAYLLVADEAAAFWATLAKGALKLIPTIANAFSSKSKKRREINNVFEPYHENLDLELERFLSQLQ.

An N-terminal signal peptide occupies residues 1–22 (MQYKTFLVISLAYLLVADEAAA). Residues 51-75 (EINNVFEPYHENLDLELERFLSQLQ) constitute a propeptide that is removed on maturation.

Expressed by the venom gland.

It is found in the secreted. Its subcellular location is the target cell membrane. Amphipathic peptide with probable antimicrobial activity. May act by disrupting the integrity of the bacterial cell membrane. In Opisthacanthus cayaporum (South American scorpion), this protein is OcyC3.